The sequence spans 48 residues: uncharacterized protein (48 aa).

Belongs to the ELIP/psbS family.

It localises to the plastid. Its subcellular location is the chloroplast. Its function is as follows. Possible role in chlorophyll and/or carotenoid binding. This is an uncharacterized protein from Pyropia yezoensis (Susabi-nori).